The following is a 97-amino-acid chain: UPF0235 protein PFL_5841 (97 aa).

The protein belongs to the UPF0235 family.

The polypeptide is UPF0235 protein PFL_5841 (Pseudomonas fluorescens (strain ATCC BAA-477 / NRRL B-23932 / Pf-5)).